Here is a 91-residue protein sequence, read N- to C-terminus: Uteroglobin (91 aa).

Positions 1-21 (MKLTIAIVLVTLTLFCRPAST) are cleaved as a signal peptide.

It belongs to the secretoglobin family. In terms of assembly, antiparallel homodimer; disulfide-linked. Interaction with LMBR1L is controversial.

It localises to the secreted. Its function is as follows. Binds phosphatidylcholine, phosphatidylinositol, polychlorinated biphenyls (PCB) and weakly progesterone, potent inhibitor of phospholipase A2. This is Uteroglobin (SCGB1A1) from Bos taurus (Bovine).